The chain runs to 248 residues: 4-hydroxy-tetrahydrodipicolinate reductase (248 aa).

Asp-28 lines the NAD(+) pocket. NADP(+) is bound at residue Lys-29. Residues 78–80 (ATT) and 102–105 (SYNM) each bind NAD(+). Residue His-134 is the Proton donor/acceptor of the active site. His-135 is a (S)-2,3,4,5-tetrahydrodipicolinate binding site. Lys-138 acts as the Proton donor in catalysis. 144–145 (GT) contacts (S)-2,3,4,5-tetrahydrodipicolinate.

It belongs to the DapB family.

The protein resides in the cytoplasm. It carries out the reaction (S)-2,3,4,5-tetrahydrodipicolinate + NAD(+) + H2O = (2S,4S)-4-hydroxy-2,3,4,5-tetrahydrodipicolinate + NADH + H(+). The enzyme catalyses (S)-2,3,4,5-tetrahydrodipicolinate + NADP(+) + H2O = (2S,4S)-4-hydroxy-2,3,4,5-tetrahydrodipicolinate + NADPH + H(+). Its pathway is amino-acid biosynthesis; L-lysine biosynthesis via DAP pathway; (S)-tetrahydrodipicolinate from L-aspartate: step 4/4. Functionally, catalyzes the conversion of 4-hydroxy-tetrahydrodipicolinate (HTPA) to tetrahydrodipicolinate. The polypeptide is 4-hydroxy-tetrahydrodipicolinate reductase (Exiguobacterium sibiricum (strain DSM 17290 / CCUG 55495 / CIP 109462 / JCM 13490 / 255-15)).